Reading from the N-terminus, the 158-residue chain is Ribosome maturation factor RimP (158 aa).

Belongs to the RimP family.

The protein resides in the cytoplasm. Its function is as follows. Required for maturation of 30S ribosomal subunits. The protein is Ribosome maturation factor RimP of Pediococcus pentosaceus (strain ATCC 25745 / CCUG 21536 / LMG 10740 / 183-1w).